We begin with the raw amino-acid sequence, 131 residues long: Profilin LP04 (131 aa).

Belongs to the profilin family. As to quaternary structure, occurs in many kinds of cells as a complex with monomeric actin in a 1:1 ratio.

The protein resides in the cytoplasm. Its subcellular location is the cytoskeleton. Binds to actin and affects the structure of the cytoskeleton. At high concentrations, profilin prevents the polymerization of actin, whereas it enhances it at low concentrations. By binding to PIP2, it inhibits the formation of IP3 and DG. The polypeptide is Profilin LP04 (Oryza sativa subsp. indica (Rice)).